The following is a 352-amino-acid chain: UDP-N-acetylglucosamine--N-acetylmuramyl-(pentapeptide) pyrophosphoryl-undecaprenol N-acetylglucosamine transferase (352 aa).

UDP-N-acetyl-alpha-D-glucosamine is bound by residues 11–13 (TGG), Asn-120, Arg-161, Ser-188, and Gln-286.

The protein belongs to the glycosyltransferase 28 family. MurG subfamily.

The protein localises to the cell inner membrane. The catalysed reaction is di-trans,octa-cis-undecaprenyl diphospho-N-acetyl-alpha-D-muramoyl-L-alanyl-D-glutamyl-meso-2,6-diaminopimeloyl-D-alanyl-D-alanine + UDP-N-acetyl-alpha-D-glucosamine = di-trans,octa-cis-undecaprenyl diphospho-[N-acetyl-alpha-D-glucosaminyl-(1-&gt;4)]-N-acetyl-alpha-D-muramoyl-L-alanyl-D-glutamyl-meso-2,6-diaminopimeloyl-D-alanyl-D-alanine + UDP + H(+). The protein operates within cell wall biogenesis; peptidoglycan biosynthesis. Cell wall formation. Catalyzes the transfer of a GlcNAc subunit on undecaprenyl-pyrophosphoryl-MurNAc-pentapeptide (lipid intermediate I) to form undecaprenyl-pyrophosphoryl-MurNAc-(pentapeptide)GlcNAc (lipid intermediate II). The polypeptide is UDP-N-acetylglucosamine--N-acetylmuramyl-(pentapeptide) pyrophosphoryl-undecaprenol N-acetylglucosamine transferase (Prochlorococcus marinus (strain NATL1A)).